We begin with the raw amino-acid sequence, 274 residues long: Thiamine kinase (274 aa).

This sequence belongs to the thiamine kinase family.

The catalysed reaction is thiamine + ATP = thiamine phosphate + ADP + H(+). It participates in cofactor biosynthesis; thiamine diphosphate biosynthesis; thiamine phosphate from thiamine: step 1/1. Catalyzes the ATP-dependent phosphorylation of thiamine to thiamine phosphate. Is involved in thiamine salvage. The sequence is that of Thiamine kinase from Salmonella typhi.